A 640-amino-acid chain; its full sequence is MRQRADVEVGPLKSGLLFSYMQNFCALQTRLRRPSRTTELDTMDFKPFLTLQHFRPQGFAGDVLAPGASYNQTWNTMASKFNGRGGNRVETGKVLEAASESLKETVPLLQLVVRARHHPLLVFLVGLFLGTIYLLYRYWDCAVGCERRPDLKGPKGLPLIGNLMWALKNRDPLSYQVYAQQKYGYGNTHTLPGLGRLIDISRPDWIEHVQKIKFSNYVKGEQFHDQMRDVLGDGIFTSDGERWKMQRKVASRIFTVSSFKAIITQTIREDCALVEQLIETYARQGTVFNLQELYFKFTLSSFVKIAFSQDIKSLSEPDRPDTFGDAFNYAQKVLDMRFVQPWWKIAERFNETGRKMRAARKIVEEFTTNIVEARRKESEAMGEKSKPESSRKDLLDLFMAYRSSDGQRLSNQQLKDTILNLMIAGRDTTAEALSWMSWHMLTKPDVYDRIRHEIDATLEEEGEQAGLEIDYDVFEQHTAKLTTFQETLRLHPSIPKNIRRALQDDVLPNGGPRVRKGDLMLYSDWAMGRNPDIWGPDACEFKPSRWTDQETGSSIKYSQFQAHFFNGGPRLCLGQKLASYEVVQLIHHIFAKFDLELIDLGPGRSAGFGKVPDYLNSLTHPMKRPLMVKATLRCCKEGTR.

N-linked (GlcNAc...) asparagine glycosylation occurs at Asn71. Residues 120–139 (LLVFLVGLFLGTIYLLYRYW) traverse the membrane as a helical segment. The N-linked (GlcNAc...) asparagine glycan is linked to Asn350. Cys572 is a binding site for heme.

The protein belongs to the cytochrome P450 family. The cofactor is heme.

It is found in the membrane. It functions in the pathway secondary metabolite biosynthesis. In terms of biological role, cytochrome P450 monooxygenase; part of the gene cluster that mediates the biosynthesis of the glycolipid biosurfactant ustilagic acid (UA). UA is a secreted cellobiose glycolipid that is toxic for many microorganisms and confers biocontrol activity to U.maydis. UA consists of 15,16-dihydroxypalmitic or 2,15,16-trihydroxypalmitic acid, which is O-glycosidically linked to cellobiose at its terminal hydroxyl group. In addition, the cellobiose moiety is acetylated and acylated with a short-chain hydroxy fatty acid. UA biosynthesis starts with omega-hydroxylation of palmitic acid catalyzed by the cytochrome P450 monooxygenase cyp1. Terminal hydroxylation of palmitic acid precedes subterminal hydroxylation catalyzed by the cytochrome P450 monooxygenase cyp2. Sequential glucosylation of the hydroxy fatty acid is probably catalyzed by the glycosyltransferase ugt1. The cellobiose lipid is further decorated by acetylation of the proximal glucose residue and by acylation with a short-chain beta-hydroxy fatty acid at the distal glucose residue. The acyltransferase uat1 may be a good candidate for catalyzing either acetylation or acylation of the cellobiose lipid. The fatty acid synthase fas2 may be involved in synthesis of the carbon backbone of the short-chain beta-hydroxy fatty acid esterified to the cellobiose disaccharide. The secreted UA consists of a mixture of both alpha-hydroxylated and non-hydroxylated glycolipids; therefore, alpha-hydroxylation of the long-chain fatty, catalyzed by the fatty acid hydroxylase ahd1, occurs late in UA biosynthesis and may be the last step before secretion. This Mycosarcoma maydis (Corn smut fungus) protein is Cytochrome P450 monooxygenase cyp1.